Consider the following 464-residue polypeptide: Protein FAM90A24 (464 aa).

Disordered regions lie at residues 1–42 (MMAR…DPRL), 69–389 (VPAT…HDGA), and 415–437 (HSPE…SEAP). Composition is skewed to basic and acidic residues over residues 74–89 (GKKE…KPRG) and 97–114 (NKDK…DPQR). The span at 180–197 (LASLSPLRKASLSSSSSL) shows a compositional bias: low complexity.

It belongs to the FAM90 family.

In Homo sapiens (Human), this protein is Protein FAM90A24.